We begin with the raw amino-acid sequence, 300 residues long: U6 snRNA methylphosphate capping enzyme Amus (300 aa).

Polar residues predominate over residues 1 to 12; the sequence is MDLENNNNTPLT. Disordered regions lie at residues 1–21 and 34–68; these read MDLE…KCAK and VESK…GKPM. Basic and acidic residues predominate over residues 34–44; the sequence is VESKRLKKEES. Residues 95 to 300 form the Bin3-type SAM domain; it reads DIRLDVLGTQ…KRPIQIFTKS (206 aa). 2 residues coordinate S-adenosyl-L-methionine: Asn119 and Asp140.

It belongs to the methyltransferase superfamily.

Its subcellular location is the nucleus. Probable S-adenosyl-L-methionine-dependent methyltransferase that binds and stabilizes U6 snRNA, probably by adding a methylphosphate cap at its 5'-end. Required for U6 stability, but not stability of 7SK snRNAs, other miRNAs or tRNAs. U6 stabilization is required for efficient pre-mRNA splicing. Essential for organismal and germline development. This chain is U6 snRNA methylphosphate capping enzyme Amus, found in Drosophila melanogaster (Fruit fly).